We begin with the raw amino-acid sequence, 204 residues long: Ras-related and estrogen-regulated growth inhibitor-like protein (204 aa).

The interval 1–204 (MNDVKLTVLG…NVFGKRRKSV (204 aa)) is small GTPase-like. GTP contacts are provided by residues 10 to 17 (GGEGTGKS), 57 to 63 (DPCSQPQ), and 122 to 125 (NKQD).

This sequence belongs to the small GTPase superfamily. Ras family.

The catalysed reaction is GTP + H2O = GDP + phosphate + H(+). Its function is as follows. Binds GDP/GTP and may possess intrinsic GTPase activity. The polypeptide is Ras-related and estrogen-regulated growth inhibitor-like protein (RERGL) (Bos taurus (Bovine)).